The chain runs to 750 residues: MLRAKNQLFLLSPHYLRQVKESSGSRLIQQRLLHQQQPLHPEWAALAKKQLKGKNPEDLIWHTPEGISIKPLYSKRDTMDLPEELPGVKPFTRGPYPTMYTFRPWTIRQYAGFSTVEESNKFYKDNIKAGQQGLSVAFDLATHRGYDSDNPRVRGDVGMAGVAIDTVEDTKILFDGIPLEKMSVSMTMNGAVIPVLANFIVTGEEQGVPKEKLTGTIQNDILKEFMVRNTYIFPPEPSMKIIADIFEYTAKHMPKFNSISISGYHMQEAGADAILELAYTLADGLEYSRTGLQAGLTIDEFAPRLSFFWGIGMNFYMEIAKMRAGRRLWAHLIEKMFQPKNSKSLLLRAHCQTSGWSLTEQDPYNNIVRTAIEAMAAVFGGTQSLHTNSFDEALGLPTVKSARIARNTQIIIQEESGIPKVADPWGGSYMMECLTNDVYDAALKLINEIEEMGGMAKAVAEGIPKLRIEECAARRQARIDSGSEVIVGVNKYQLEKEDAVEVLAIDNTSVRNRQIEKLKKIKSSRDQALAERCLAALTECAASGDGNILALAVDASRARCTVGEITDALKKVFGEHKANDRMVSGAYRQEFGESKEITSAIKRVHKFMEREGRRPRLLVAKMGQDGHDRGAKVIATGFADLGFDVDIGPLFQTPREVAQQAVDADVHAVGISTLAAGHKTLVPELIKELNSLGRPDILVMCGGVIPPQDYEFLFEVGVSNVFGPGTRIPKAAVQVLDDIEKCLEKKQQSV.

Residues 1–32 (MLRAKNQLFLLSPHYLRQVKESSGSRLIQQRL) constitute a mitochondrion transit peptide. Gln-50 serves as a coordination point for malonyl-CoA. Residue Lys-89 is modified to N6-acetyllysine. Residues 96–99 (YPTM) and 106–110 (TIRQY) each bind malonyl-CoA. Lys-212 is subject to N6-acetyllysine. Malonyl-CoA contacts are provided by residues 216-218 (TIQ), Arg-228, Lys-255, His-265, and 304-306 (RLS). Position 335 is an N6-acetyllysine (Lys-335). An N6-succinyllysine modification is found at Lys-343. Phosphoserine is present on Ser-481. Lys-595 is subject to N6-succinyllysine. N6-acetyllysine is present on Lys-602. One can recognise a B12-binding domain in the interval 614 to 746 (RPRLLVAKMG…DDIEKCLEKK (133 aa)). His-627 contributes to the adenosylcob(III)alamin binding site.

Belongs to the methylmalonyl-CoA mutase family. In terms of assembly, homodimer. Interacts (the apoenzyme form) with MMAA; the interaction is GTP dependent. Adenosylcob(III)alamin is required as a cofactor.

It localises to the mitochondrion matrix. The protein resides in the mitochondrion. Its subcellular location is the cytoplasm. The catalysed reaction is (R)-methylmalonyl-CoA = succinyl-CoA. With respect to regulation, during catalysis, accumulation of oxidized inactive cofactor hydroxocobalamin (OH2Cbl) leads to loss of MMUT activity. Interaction with MMAA decreases the rate of OH2Cbl formation and promotes the replacement of OH2Cbl by the active cofactor adenosylcobalamin (AdoCbl), thereby restoring MMUT activity. Inhibited by itaconyl-CoA, a metabolite that inactivates the coenzyme B12 cofactor. Inhibited at high concentration of substrate. Its function is as follows. Catalyzes the reversible isomerization of methylmalonyl-CoA (MMCoA) (generated from branched-chain amino acid metabolism and degradation of dietary odd chain fatty acids and cholesterol) to succinyl-CoA (3-carboxypropionyl-CoA), a key intermediate of the tricarboxylic acid cycle. The protein is Methylmalonyl-CoA mutase, mitochondrial of Homo sapiens (Human).